Consider the following 66-residue polypeptide: Large ribosomal subunit protein bL35 (66 aa).

This sequence belongs to the bacterial ribosomal protein bL35 family.

The protein is Large ribosomal subunit protein bL35 of Synechococcus sp. (strain JA-2-3B'a(2-13)) (Cyanobacteria bacterium Yellowstone B-Prime).